The chain runs to 130 residues: Tripartite terminase subunit 2 (130 aa).

It belongs to the herpesviridae TRM2 protein family. In terms of assembly, associates with TRM1 and TRM3 to form the tripartite terminase complex.

The protein resides in the host nucleus. Component of the molecular motor that translocates viral genomic DNA in empty capsid during DNA packaging. Forms a tripartite terminase complex together with TRM1 and TRM3 in the host cytoplasm. Once the complex reaches the host nucleus, it interacts with the capsid portal vertex. This portal forms a ring in which genomic DNA is translocated into the capsid. This is Tripartite terminase subunit 2 from Homo sapiens (Human).